Consider the following 201-residue polypeptide: GTP cyclohydrolase 1 (201 aa).

Positions 1–20 are disordered; the sequence is MDATVKKMSPETSRPSREEA. Zn(2+) is bound by residues C91, H94, and C162.

It belongs to the GTP cyclohydrolase I family. In terms of assembly, homomer.

The enzyme catalyses GTP + H2O = 7,8-dihydroneopterin 3'-triphosphate + formate + H(+). It functions in the pathway cofactor biosynthesis; 7,8-dihydroneopterin triphosphate biosynthesis; 7,8-dihydroneopterin triphosphate from GTP: step 1/1. The sequence is that of GTP cyclohydrolase 1 from Allorhizobium ampelinum (strain ATCC BAA-846 / DSM 112012 / S4) (Agrobacterium vitis (strain S4)).